The sequence spans 217 residues: Large ribosomal subunit protein uL4c (217 aa).

Residues 51 to 85 (HRNRNAHTQTRGEVSGGGRKPWKQKGTGRARAGSN) form a disordered region.

It belongs to the universal ribosomal protein uL4 family. As to quaternary structure, part of the 50S ribosomal subunit.

Its subcellular location is the plastid. It localises to the chloroplast. Probably binds the 23S rRNA. This Gracilaria tenuistipitata var. liui (Red alga) protein is Large ribosomal subunit protein uL4c (rpl4).